Consider the following 225-residue polypeptide: Protein YIP4 (225 aa).

Phosphoserine occurs at positions 27 and 28. Helical transmembrane passes span 91 to 111, 118 to 138, 154 to 176, 180 to 199, and 205 to 225; these read WDLW…ALST, SVFT…SLNI, LGYS…LIFI, VIVA…LQNS, and KLLA…IIFL.

The protein belongs to the YIP1 family. In terms of assembly, interacts with the YIP1 family members yip1 and yip5, and with several Rab GTPases.

Its subcellular location is the membrane. Functionally, may be involved in proper membrane localization of Rab GTPases. This chain is Protein YIP4, found in Schizosaccharomyces pombe (strain 972 / ATCC 24843) (Fission yeast).